Consider the following 188-residue polypeptide: Pterocarpan synthase 1 (188 aa).

The signal sequence occupies residues 1-23; the sequence is MAKSTTFFISLTLPFLLLSVVTA. Asn127 is a glycosylation site (N-linked (GlcNAc...) asparagine).

It belongs to the plant dirigent protein family. As to quaternary structure, homodimer.

The protein localises to the secreted. It is found in the extracellular space. Its subcellular location is the apoplast. The enzyme catalyses a (4R)-4,2'-dihydroxyisoflavan = a pterocarpan + H2O.. It catalyses the reaction (3R,4R)-7,2'-dihydroxy-4'-methoxyisoflavanol = (-)-medicarpin + H2O. It carries out the reaction (3S,4R)-7,2'-dihydroxy-4'-methoxyisoflavanol = (+)-medicarpin + H2O. The catalysed reaction is (3R,4R)-3-(6-hydroxy-1,3-benzodioxol-5-yl)-3,4-dihydro-2H-chromene-4,7-diol = (-)-maackiain + H2O. The enzyme catalyses (3R,4R)-7,2',4'-trihydroxyisoflavanol = (6aR,11aR)-3,9-dihydroxypterocarpan + H2O. Involved in pterocarpan phytoalexin biosynthesis. Catalyzes the last step in the biosynthesis of the phytoalexin medicarpin, and thereby contributes to plant defense reactions. Dirigent proteins impart stereoselectivity on the phenoxy radical-coupling reaction, yielding optically active lignans from two molecules of coniferyl alcohol in the biosynthesis of lignans, flavonolignans, and alkaloids and thus plays a central role in plant secondary metabolism. The sequence is that of Pterocarpan synthase 1 from Glycyrrhiza echinata (Licorice).